The chain runs to 315 residues: Ribosomal RNA small subunit methyltransferase H (315 aa).

Residues 36 to 38 (GGH), aspartate 56, phenylalanine 80, aspartate 102, and glutamine 109 each bind S-adenosyl-L-methionine.

The protein belongs to the methyltransferase superfamily. RsmH family.

It is found in the cytoplasm. The enzyme catalyses cytidine(1402) in 16S rRNA + S-adenosyl-L-methionine = N(4)-methylcytidine(1402) in 16S rRNA + S-adenosyl-L-homocysteine + H(+). Its function is as follows. Specifically methylates the N4 position of cytidine in position 1402 (C1402) of 16S rRNA. The protein is Ribosomal RNA small subunit methyltransferase H of Proteus mirabilis (strain HI4320).